Here is a 25-residue protein sequence, read N- to C-terminus: Small ribosomal subunit protein eS32 (25 aa).

The segment at 1 to 25 is disordered; that stretch reads MRAKWRKKRVRRLKRKRRKTRARSK.

Belongs to the eukaryotic ribosomal protein eS32 family. In terms of assembly, component of the small ribosomal subunit.

The protein is Small ribosomal subunit protein eS32 (RPL41) of Quercus suber (Cork oak).